The following is a 395-amino-acid chain: 1-deoxy-D-xylulose 5-phosphate reductoisomerase (395 aa).

NADPH is bound by residues Thr15, Gly16, Ser17, Ile18, Gly41, Asn43, and Asn126. Lys127 contacts 1-deoxy-D-xylulose 5-phosphate. Glu128 serves as a coordination point for NADPH. Residue Asp152 participates in Mn(2+) binding. Residues Ser153, Glu154, Ser178, and His201 each coordinate 1-deoxy-D-xylulose 5-phosphate. Glu154 contacts Mn(2+). Gly207 contacts NADPH. The 1-deoxy-D-xylulose 5-phosphate site is built by Ser214, Asn219, Lys220, and Glu223. Glu223 lines the Mn(2+) pocket.

Belongs to the DXR family. The cofactor is Mg(2+). Requires Mn(2+) as cofactor.

It catalyses the reaction 2-C-methyl-D-erythritol 4-phosphate + NADP(+) = 1-deoxy-D-xylulose 5-phosphate + NADPH + H(+). It functions in the pathway isoprenoid biosynthesis; isopentenyl diphosphate biosynthesis via DXP pathway; isopentenyl diphosphate from 1-deoxy-D-xylulose 5-phosphate: step 1/6. Catalyzes the NADPH-dependent rearrangement and reduction of 1-deoxy-D-xylulose-5-phosphate (DXP) to 2-C-methyl-D-erythritol 4-phosphate (MEP). This Ruegeria pomeroyi (strain ATCC 700808 / DSM 15171 / DSS-3) (Silicibacter pomeroyi) protein is 1-deoxy-D-xylulose 5-phosphate reductoisomerase.